The chain runs to 1682 residues: Collagen alpha-4(IV) chain (1682 aa).

Positions 1–32 (MRCFFRWTKSFVTAPWSLIFILFTIQYEYGSG) are cleaved as a signal peptide. The interval 31–56 (SGKKYGGPCGGRNCSVCQCFPEKGSR) is 7S domain. N43 carries an N-linked (GlcNAc...) asparagine glycan. Disordered stretches follow at residues 56-255 (RGHP…VQPP) and 379-1453 (PGPP…FGPG). The triple-helical region stretch occupies residues 57 to 1451 (GHPGPLGPQG…TGDPGPKGFG (1395 aa)). The Cell attachment site signature appears at 86–88 (RGD). The segment covering 103–116 (PTGVPGFPGVDGVP) has biased composition (low complexity). N-linked (GlcNAc...) asparagine glycosylation is present at N134. 2 short sequence motifs (cell attachment site) span residues 137 to 139 (RGD) and 181 to 183 (RGD). Pro residues predominate over residues 396-410 (MGPPGPPGVPGPPGF). A compositionally biased stretch (low complexity) spans 411 to 426 (PGEAGVPGRLDCAPGK). The span at 487-500 (PPGPMGPPGPPGPP) shows a compositional bias: pro residues. Basic and acidic residues predominate over residues 578–601 (DGGDGRPGERGDPGPRGDHKDAAP). 2 consecutive short sequence motifs (cell attachment site) follow at residues 587–589 (RGD) and 593–595 (RGD). Residues 609–621 (LPGPPGRTGPEGP) are compositionally biased toward pro residues. Residues 632–647 (QRGLPGEPGRPGTRGF) are compositionally biased toward low complexity. N-linked (GlcNAc...) asparagine glycosylation occurs at N661. The segment covering 665-682 (PGKPGLPGLDGPPGLKGF) has biased composition (low complexity). The Cell attachment site motif lies at 716 to 718 (RGD). Composition is skewed to low complexity over residues 742 to 758 (PGKDGQKGIPGDPAFGD) and 857 to 902 (PAGM…LPGL). 2 stretches are compositionally biased toward basic and acidic residues: residues 911–929 (ERGKPGPDGEPGRKGEVGE) and 938–950 (DLGERGAKGDRGL). Gly residues predominate over residues 969-978 (GPPGDGGFSG). 2 consecutive short sequence motifs (cell attachment site) follow at residues 980–982 (RGD) and 992–994 (RGD). A compositionally biased stretch (low complexity) spans 998–1010 (DGLPGLHRGQPGI). Pro residues predominate over residues 1011–1025 (DGPPGPPGPPGPPGS). Residues 1034–1044 (FPGFPGDQGDP) show a composition bias toward low complexity. The Cell attachment site signature appears at 1144–1146 (RGD). Composition is skewed to pro residues over residues 1223-1235 (PGPPGRPGPPGPA), 1248-1272 (DPGPPGDRGPPGPDGPRGVPGPPGS), 1289-1304 (PGPPGSRGPPGPPGCQ), 1340-1351 (PGPPGRKGPVGP), and 1435-1444 (APGPPGPTGD). In terms of domain architecture, Collagen IV NC1 spans 1457 to 1682 (GFLLVLHSQT…SRCQVCMKHS (226 aa)). Intrachain disulfides connect C1472–C1561, C1505–C1558, C1517–C1523, C1580–C1678, C1614–C1675, and C1626–C1633.

This sequence belongs to the type IV collagen family. There are six type IV collagen isoforms, alpha 1(IV)-alpha 6(IV), each of which can form a triple helix structure with 2 other chains to generate type IV collagen network. The alpha 3(IV) chain forms a triple helical protomer with alpha 4(IV) and alpha 5(IV); this triple helical structure dimerizes through NC1-NC1 domain interactions such that the alpha 3(IV), alpha 4(IV) and alpha 5(IV) chains of one protomer connect with the alpha 5(IV), alpha 4(IV) and alpha 3(IV) chains of the opposite protomer, respectively. Associates with LAMB2 at the neuromuscular junction and in GBM. Post-translationally, prolines at the third position of the tripeptide repeating unit (G-X-Y) are hydroxylated in some or all of the chains. Type IV collagens contain numerous cysteine residues which are involved in inter- and intramolecular disulfide bonding. 12 of these, located in the NC1 domain, are conserved in all known type IV collagens. In terms of processing, the trimeric structure of the NC1 domains is stabilized by covalent bonds between Lys and Met residues. In terms of tissue distribution, expressed in Bruch's membrane, outer plexiform layer, inner nuclear layer, inner plexiform layer, ganglion cell layer, inner limiting membrane and around the blood vessels of the retina (at protein level). Highly expressed in kidney and lung. Detected at lower levels in heart, muscle and skin.

Its subcellular location is the secreted. The protein localises to the extracellular space. It localises to the extracellular matrix. The protein resides in the basement membrane. In terms of biological role, type IV collagen is the major structural component of glomerular basement membranes (GBM), forming a 'chicken-wire' meshwork together with laminins, proteoglycans and entactin/nidogen. This chain is Collagen alpha-4(IV) chain, found in Mus musculus (Mouse).